Consider the following 119-residue polypeptide: Putative membrane protein insertion efficiency factor (119 aa).

Belongs to the UPF0161 family.

The protein resides in the cell inner membrane. Could be involved in insertion of integral membrane proteins into the membrane. The chain is Putative membrane protein insertion efficiency factor from Brucella anthropi (strain ATCC 49188 / DSM 6882 / CCUG 24695 / JCM 21032 / LMG 3331 / NBRC 15819 / NCTC 12168 / Alc 37) (Ochrobactrum anthropi).